Consider the following 346-residue polypeptide: Insertion element IS476 uncharacterized 39.2 kDa protein (346 aa).

The disordered stretch occupies residues 1-50 (MVSARPAFISGGPSTGGWRPTRQAAERTGGPEHSIEEVAGRGAPGHRSAE). Residues 29 to 39 (GGPEHSIEEVA) are compositionally biased toward basic and acidic residues. The Integrase catalytic domain maps to 169–329 (ASSMPNDTWS…IPPAQFAANY (161 aa)).

The chain is Insertion element IS476 uncharacterized 39.2 kDa protein from Xanthomonas euvesicatoria.